The sequence spans 141 residues: Hemoglobin subunit alpha (141 aa).

The 141-residue stretch at Val1–Arg141 folds into the Globin domain. Residue Ser3 is modified to Phosphoserine. Lys7 carries the N6-succinyllysine modification. Thr8 carries the phosphothreonine modification. Lys11 carries the N6-succinyllysine modification. Lys16 is modified (N6-acetyllysine; alternate). Lys16 carries the N6-succinyllysine; alternate modification. Tyr24 bears the Phosphotyrosine mark. Ser35 carries the post-translational modification Phosphoserine. At Lys40 the chain carries N6-succinyllysine. A Phosphoserine modification is found at Ser49. His58 contacts O2. Position 87 (His87) interacts with heme b. Ser102 is modified (phosphoserine). A Phosphothreonine modification is found at Thr108. Ser124 and Ser131 each carry phosphoserine. Phosphothreonine occurs at positions 134 and 137. Ser138 carries the post-translational modification Phosphoserine.

This sequence belongs to the globin family. As to quaternary structure, heterotetramer of two alpha chains and two beta chains. Red blood cells.

Involved in oxygen transport from the lung to the various peripheral tissues. Its function is as follows. Hemopressin acts as an antagonist peptide of the cannabinoid receptor CNR1. Hemopressin-binding efficiently blocks cannabinoid receptor CNR1 and subsequent signaling. In Gorilla gorilla gorilla (Western lowland gorilla), this protein is Hemoglobin subunit alpha (HBA).